The primary structure comprises 251 residues: Derlin-1 (251 aa).

Ser2 is subject to N-acetylserine. At 2-15 (SDIGDWFRSIPAIT) the chain is on the cytoplasmic side. A helical membrane pass occupies residues 16–31 (RYWFAATVAVPLIGKL). Over 32–69 (GIISPAYFFLWPEAFLYRFQIWRPFTATFYFPVGPGTG) the chain is Lumenal. The chain crosses the membrane as a helical span at residues 70-89 (FLYLVNLYFLYQYSTRLEAG). Residues 90–94 (AFDGR) are Cytoplasmic-facing. The helical transmembrane segment at 95-115 (PADYLFMLLFNWICIVITGLA) threads the bilayer. The Lumenal segment spans residues 116-122 (MDMQLLM). Residues 123–137 (IPLIMSVLYVWAQLN) form a helical membrane-spanning segment. Over 138 to 154 (RDLIVSFWFGTRFKACY) the chain is Cytoplasmic. The chain crosses the membrane as a helical span at residues 155–166 (LPWVILGFNYII). At 167–170 (GGSV) the chain is on the lumenal side. Residues 171–189 (INELIGNLVGHLYFFLMFR) traverse the membrane as a helical segment. At 190-251 (YPMDLGGRNF…WGQGFRLGDQ (62 aa)) the chain is on the cytoplasmic side. Position 201 is a phosphoserine (Ser201). A Phosphothreonine modification is found at Thr202. Residue Ser226 is modified to Phosphoserine. The segment at 229–251 (RAADQNGGGGRHNWGQGFRLGDQ) is disordered. The SHP-box motif lies at 241-248 (NWGQGFRL).

This sequence belongs to the derlin family. In terms of assembly, homotetramer. The four subunits of the tetramer are arranged in a twofold symmetry. Forms homo- and heterooligomers with DERL2 and DERL3; binding to DERL3 is poorer than that between DERL2 and DERL3. Interacts (via SHP-box motif) with VCP. Interacts with AMFR, SELENOS, SEL1L, SELENOK and SYVN1, as well as with SEL1L-SYVN1 and VCP-SELENOS protein complexes; this interaction is weaker than that observed between DERL2 and these complexes. Interacts with NGLY1 and YOD1. Does not bind to EDEM1. Interacts with DNAJB9. Interacts with RNF103. Interacts with HM13. Interacts with XBP1 isoform 1 (via luminal/ectodomain domain); the interaction obviates the need for ectodomain shedding prior HM13/SPP-mediated XBP1 isoform 1 cleavage. Interacts with the signal recognition particle/SRP and the SRP receptor; in the process of endoplasmic reticulum stress-induced pre-emptive quality control. May interact with UBXN6. Interacts with ZFAND2B; probably through VCP. Interacts with CCDC47. Interacts with C18orf32. May interact with TRAM1. Forms a complex with SVIP and VCP/p97. As to expression, widely expressed, with lowest levels in brain and heart.

The protein localises to the endoplasmic reticulum membrane. In terms of biological role, functional component of endoplasmic reticulum-associated degradation (ERAD) for misfolded lumenal proteins. Forms homotetramers which encircle a large channel traversing the endoplasmic reticulum (ER) membrane. This allows the retrotranslocation of misfolded proteins from the ER into the cytosol where they are ubiquitinated and degraded by the proteasome. The channel has a lateral gate within the membrane which provides direct access to membrane proteins with no need to reenter the ER lumen first. May mediate the interaction between VCP and the misfolded protein. Also involved in endoplasmic reticulum stress-induced pre-emptive quality control, a mechanism that selectively attenuates the translocation of newly synthesized proteins into the endoplasmic reticulum and reroutes them to the cytosol for proteasomal degradation. By controlling the steady-state expression of the IGF1R receptor, indirectly regulates the insulin-like growth factor receptor signaling pathway. This Mus musculus (Mouse) protein is Derlin-1.